Here is a 210-residue protein sequence, read N- to C-terminus: 23 kDa jasmonate-induced protein (210 aa).

This sequence belongs to the jasmonate-induced protein family.

This Hordeum vulgare (Barley) protein is 23 kDa jasmonate-induced protein.